The primary structure comprises 179 residues: Bacterioferritin (179 aa).

In terms of domain architecture, Ferritin-like diiron spans 1-150 (MAGNREDRKA…NIGSHIKNLG (150 aa)). Fe cation contacts are provided by E23 and E56. M57 serves as a coordination point for Fe-coproporphyrin III. 4 residues coordinate Fe cation: H59, E99, E132, and H135.

Belongs to the bacterioferritin family. In terms of assembly, homooligomer of 24 subunits, arranged as 12 dimers, that are packed together to form an approximately spherical molecule with a central cavity, in which large amounts of iron can be deposited. Fe-coproporphyrin III is required as a cofactor. It depends on Fe cation as a cofactor.

The catalysed reaction is 4 Fe(2+) + O2 + 4 H(+) = 4 Fe(3+) + 2 H2O. It carries out the reaction Fe(2+)(in) = Fe(2+)(out). Iron-storage protein, whose ferroxidase center binds Fe(2+), oxidizes it using dioxygen to Fe(3+), and participates in the subsequent Fe(3+) oxide mineral core formation within the central cavity of the BFR protein shell. The polypeptide is Bacterioferritin (bfr) (Desulfovibrio desulfuricans (strain ATCC 27774 / DSM 6949 / MB)).